A 121-amino-acid chain; its full sequence is Small ribosomal subunit protein bS21m (121 aa).

A mitochondrion-targeting transit peptide spans 1-14; the sequence is MNSSYFPGVLGVRW.

It belongs to the bacterial ribosomal protein bS21 family. As to quaternary structure, component of the mitochondrial small ribosomal subunit (mt-SSU). Mature yeast 74S mitochondrial ribosomes consist of a small (37S) and a large (54S) subunit. The 37S small subunit contains a 15S ribosomal RNA (15S mt-rRNA) and at least 32 different proteins. The 54S large subunit contains a 21S rRNA (21S mt-rRNA) and at least 45 different proteins.

It is found in the mitochondrion. Functionally, component of the mitochondrial ribosome (mitoribosome), a dedicated translation machinery responsible for the synthesis of mitochondrial genome-encoded proteins, including at least some of the essential transmembrane subunits of the mitochondrial respiratory chain. The mitoribosomes are attached to the mitochondrial inner membrane and translation products are cotranslationally integrated into the membrane. The polypeptide is Small ribosomal subunit protein bS21m (mrp21) (Schizosaccharomyces pombe (strain 972 / ATCC 24843) (Fission yeast)).